Here is a 222-residue protein sequence, read N- to C-terminus: Peptide methionine sulfoxide reductase MsrA (222 aa).

Cys60 is an active-site residue.

Belongs to the MsrA Met sulfoxide reductase family.

It carries out the reaction L-methionyl-[protein] + [thioredoxin]-disulfide + H2O = L-methionyl-(S)-S-oxide-[protein] + [thioredoxin]-dithiol. The enzyme catalyses [thioredoxin]-disulfide + L-methionine + H2O = L-methionine (S)-S-oxide + [thioredoxin]-dithiol. Its function is as follows. Has an important function as a repair enzyme for proteins that have been inactivated by oxidation. Catalyzes the reversible oxidation-reduction of methionine sulfoxide in proteins to methionine. This chain is Peptide methionine sulfoxide reductase MsrA, found in Pseudomonas putida (strain GB-1).